We begin with the raw amino-acid sequence, 452 residues long: Isocitrate dehydrogenase [NADP], mitochondrial (452 aa).

Residues 1 to 39 constitute a mitochondrion transit peptide; that stretch reads MAGYLRAVSSLCRASGSTRTWAPAALNVPSWPEQPRRHY. 4 positions are modified to N6-acetyllysine: Lys45, Lys48, Lys67, and Lys69. Residues Lys80 and Lys106 each carry the N6-acetyllysine; alternate modification. 2 positions are modified to N6-succinyllysine; alternate: Lys80 and Lys106. NADP(+) is bound by residues 115–117 and Arg122; that span reads TIT. A D-threo-isocitrate-binding site is contributed by Thr117. D-threo-isocitrate contacts are provided by residues 134 to 140 and Arg149; that span reads SPNGTIR. Lys155 bears the N6-acetyllysine mark. At Lys166 the chain carries N6-acetyllysine; alternate. The residue at position 166 (Lys166) is an N6-succinyllysine; alternate. Residue Arg172 coordinates D-threo-isocitrate. Residues Lys180 and Lys193 each carry the N6-acetyllysine; alternate modification. 2 positions are modified to N6-succinyllysine; alternate: Lys180 and Lys193. An N6-acetyllysine modification is found at Lys199. At Lys256 the chain carries N6-acetyllysine; alternate. Residue Lys256 is modified to N6-succinyllysine; alternate. 4 positions are modified to N6-acetyllysine: Lys263, Lys272, Lys275, and Lys280. Lys282 carries the post-translational modification N6-acetyllysine; alternate. At Lys282 the chain carries N6-succinyllysine; alternate. Residue Asp291 participates in Mn(2+) binding. NADP(+) is bound at residue Lys299. A Mn(2+)-binding site is contributed by Asp314. NADP(+) contacts are provided by residues 349-354 and Asn367; that span reads GTVTRH. Position 384 is an N6-acetyllysine; alternate (Lys384). Lys384 is modified (N6-succinyllysine; alternate). 3 positions are modified to N6-acetyllysine: Lys400, Lys413, and Lys442.

Belongs to the isocitrate and isopropylmalate dehydrogenases family. In terms of assembly, homodimer. Requires Mg(2+) as cofactor. The cofactor is Mn(2+). Acetylation at Lys-413 dramatically reduces catalytic activity. Deacetylated by SIRT3.

It is found in the mitochondrion. It carries out the reaction D-threo-isocitrate + NADP(+) = 2-oxoglutarate + CO2 + NADPH. Functionally, plays a role in intermediary metabolism and energy production. It may tightly associate or interact with the pyruvate dehydrogenase complex. The chain is Isocitrate dehydrogenase [NADP], mitochondrial (Idh2) from Rattus norvegicus (Rat).